A 581-amino-acid chain; its full sequence is MRTTQYLLATIKEIPKSCEPISHQLMLRSGMVRQISSGVYTWLPTGLRVLKKIENIIHEEMNKIGFLEIFMPITQPANLWKQSGRWSEYGLELLRFKNRTNQKFVLGPTHEEMITDLVCNEILSHKQFPIKLYQINTKYRDEARPQFGVIRSKEFIMKDGYSFHIHQKSLEDTYYNIYQQYHIIFKRIGLKFCVVQADPGNIGGIVSHEFQAYYNNTQNETAIFTETFNKDMSNINTRKNNDIVINNIHILNTIQTIKLTSADFHNLIIMRLINYYKSFIQETIKNIIIYIKNKNNIYNLHRIATQAYEKFNDLKLVKIPDIIIPISILNKKNIEIKLNLLKLINTPVPLMINYNVATAMYDFIFHNININKNYCMKINQTPNLSKITTNLYESNIKKINTNQIRKLLPIRNTIEIGHIFQLGKKYSNCINSCIQKKNKDNLNITMGCYGIGITRIVPMVIEQHHDKHGIIWPNEIAPFKLAIIPINMYRFINVQNTAEELYTQLSSIPVIGFDILLDDRKENPGIMFTDIDLLGIPHILIISERNLNNQEVEYKYRKTGIIQKIKLNLIIQFLTEKLMNN.

Belongs to the class-II aminoacyl-tRNA synthetase family. ProS type 1 subfamily. Homodimer.

The protein localises to the cytoplasm. It carries out the reaction tRNA(Pro) + L-proline + ATP = L-prolyl-tRNA(Pro) + AMP + diphosphate. Functionally, catalyzes the attachment of proline to tRNA(Pro) in a two-step reaction: proline is first activated by ATP to form Pro-AMP and then transferred to the acceptor end of tRNA(Pro). As ProRS can inadvertently accommodate and process non-cognate amino acids such as alanine and cysteine, to avoid such errors it has two additional distinct editing activities against alanine. One activity is designated as 'pretransfer' editing and involves the tRNA(Pro)-independent hydrolysis of activated Ala-AMP. The other activity is designated 'posttransfer' editing and involves deacylation of mischarged Ala-tRNA(Pro). The misacylated Cys-tRNA(Pro) is not edited by ProRS. The sequence is that of Proline--tRNA ligase from Blochmanniella floridana.